Here is a 103-residue protein sequence, read N- to C-terminus: Small ribosomal subunit protein uS10 (103 aa).

It belongs to the universal ribosomal protein uS10 family. As to quaternary structure, part of the 30S ribosomal subunit.

Its function is as follows. Involved in the binding of tRNA to the ribosomes. In Xylella fastidiosa (strain 9a5c), this protein is Small ribosomal subunit protein uS10.